We begin with the raw amino-acid sequence, 335 residues long: Ketol-acid reductoisomerase (NAD(P)(+)) (335 aa).

A KARI N-terminal Rossmann domain is found at 2–182 (AKIYKDEDIS…GCARAGVIES (181 aa)). NADP(+) contacts are provided by residues 25–28 (YGSQ), Arg49, Ser53, and 83–86 (DMVQ). Residue His108 is part of the active site. Gly134 contacts NADP(+). Residues 183-328 (TFKEETETDL…RKLREMMFRG (146 aa)) form the KARI C-terminal knotted domain. 4 residues coordinate Mg(2+): Asp191, Glu195, Glu227, and Glu231. Ser252 is a substrate binding site.

Belongs to the ketol-acid reductoisomerase family. In terms of assembly, homodimer. Mg(2+) serves as cofactor.

The enzyme catalyses (2R)-2,3-dihydroxy-3-methylbutanoate + NAD(+) = (2S)-2-acetolactate + NADH + H(+). The catalysed reaction is (2R)-2,3-dihydroxy-3-methylbutanoate + NADP(+) = (2S)-2-acetolactate + NADPH + H(+). Its pathway is amino-acid biosynthesis; L-isoleucine biosynthesis; L-isoleucine from 2-oxobutanoate: step 2/4. It participates in amino-acid biosynthesis; L-valine biosynthesis; L-valine from pyruvate: step 2/4. Involved in the biosynthesis of branched-chain amino acids (BCAA). Catalyzes an alkyl-migration followed by a ketol-acid reduction of (S)-2-acetolactate (S2AL) to yield (R)-2,3-dihydroxy-isovalerate. In the isomerase reaction, S2AL is rearranged via a Mg-dependent methyl migration to produce 3-hydroxy-3-methyl-2-ketobutyrate (HMKB). In the reductase reaction, this 2-ketoacid undergoes a metal-dependent reduction by NADPH or NADH to yield (R)-2,3-dihydroxy-isovalerate. The sequence is that of Ketol-acid reductoisomerase (NAD(P)(+)) from Ignisphaera aggregans (strain DSM 17230 / JCM 13409 / AQ1.S1).